Consider the following 456-residue polypeptide: Phosphomethylpyrimidine synthase (456 aa).

Substrate contacts are provided by residues N80, M109, Y139, H175, S195–G197, D236–R239, and E275. H279 is a binding site for Zn(2+). Y302 serves as a coordination point for substrate. H343 serves as a coordination point for Zn(2+). The [4Fe-4S] cluster site is built by C423, C426, and C431.

Belongs to the ThiC family. [4Fe-4S] cluster is required as a cofactor.

It carries out the reaction 5-amino-1-(5-phospho-beta-D-ribosyl)imidazole + S-adenosyl-L-methionine = 4-amino-2-methyl-5-(phosphooxymethyl)pyrimidine + CO + 5'-deoxyadenosine + formate + L-methionine + 3 H(+). The protein operates within cofactor biosynthesis; thiamine diphosphate biosynthesis. Functionally, catalyzes the synthesis of the hydroxymethylpyrimidine phosphate (HMP-P) moiety of thiamine from aminoimidazole ribotide (AIR) in a radical S-adenosyl-L-methionine (SAM)-dependent reaction. This chain is Phosphomethylpyrimidine synthase, found in Synechococcus sp. (strain ATCC 27144 / PCC 6301 / SAUG 1402/1) (Anacystis nidulans).